The chain runs to 209 residues: MSDHHGPLRVGIGGPVGSGKTALMDLLCKSMRERYDIAAITNDIYTKWDAEFLVRSGSLTPDRIAGVETGGCPHTAIREDASMNLAAVAEMRSKFPGLDLVLIESGGDNLAATFSPELADITIYVIDVAAGDKIPSKGGPGITRSDLLVINKIDLAPYVGASLEKMDTDAKRMRGARPFVMTNLKKSEGLDRIIGFIEEKGGLTPRRSA.

G14–T21 serves as a coordination point for GTP.

Belongs to the SIMIBI class G3E GTPase family. UreG subfamily. Homodimer. UreD, UreF and UreG form a complex that acts as a GTP-hydrolysis-dependent molecular chaperone, activating the urease apoprotein by helping to assemble the nickel containing metallocenter of UreC. The UreE protein probably delivers the nickel.

It localises to the cytoplasm. In terms of biological role, facilitates the functional incorporation of the urease nickel metallocenter. This process requires GTP hydrolysis, probably effectuated by UreG. In Rhodopseudomonas palustris (strain ATCC BAA-98 / CGA009), this protein is Urease accessory protein UreG.